We begin with the raw amino-acid sequence, 283 residues long: Elongation factor Ts (283 aa).

The segment at 80–83 is involved in Mg(2+) ion dislocation from EF-Tu; the sequence is TDFV.

Belongs to the EF-Ts family.

It localises to the cytoplasm. Associates with the EF-Tu.GDP complex and induces the exchange of GDP to GTP. It remains bound to the aminoacyl-tRNA.EF-Tu.GTP complex up to the GTP hydrolysis stage on the ribosome. The sequence is that of Elongation factor Ts from Erwinia tasmaniensis (strain DSM 17950 / CFBP 7177 / CIP 109463 / NCPPB 4357 / Et1/99).